Reading from the N-terminus, the 170-residue chain is Odorant-binding protein 2b (170 aa).

The signal sequence occupies residues 1-15 (MKTLFLGVTLGLAAA). Cysteines 74 and 166 form a disulfide.

Belongs to the calycin superfamily. Lipocalin family. In terms of tissue distribution, strongly expressed in genital sphere organs such as the prostate and mammary glands.

It is found in the secreted. Its function is as follows. Probably binds and transports small hydrophobic volatile molecules. The chain is Odorant-binding protein 2b (OBP2B) from Homo sapiens (Human).